A 325-amino-acid polypeptide reads, in one-letter code: MKNFSLWCDFIENSFLDNEFLNLLSHGINGATSNPAIFKNAILNSPIYKDKILKLKGKRTKDIYEELAISDIQKAADKLAPLFYQKNDGFISIEIDPRLHDNTTLSLGEAKRLYSAISKENVMIKIPATKASYEVMYELMKNGISVNATLIFSLEQSQKCFEALNAGLVEFRKNNIALKEQNTRTPQAVISIFVSRFDRLLNPKAKEQNRIGILNANLAYNNIYSKNEPNIRALFASTGVKGDDLPKDYYIKELLFENSVNTAPLDAIEAFKGKMDFKKPLMNFEIYTELNQIISQSEREKACNDLLSDGIEQFCIAFEDILKAL.

Catalysis depends on Lys-125, which acts as the Schiff-base intermediate with substrate.

The protein belongs to the transaldolase family. Type 2 subfamily.

The protein resides in the cytoplasm. It carries out the reaction D-sedoheptulose 7-phosphate + D-glyceraldehyde 3-phosphate = D-erythrose 4-phosphate + beta-D-fructose 6-phosphate. Its pathway is carbohydrate degradation; pentose phosphate pathway; D-glyceraldehyde 3-phosphate and beta-D-fructose 6-phosphate from D-ribose 5-phosphate and D-xylulose 5-phosphate (non-oxidative stage): step 2/3. In terms of biological role, transaldolase is important for the balance of metabolites in the pentose-phosphate pathway. The protein is Transaldolase of Campylobacter jejuni subsp. jejuni serotype O:6 (strain 81116 / NCTC 11828).